A 469-amino-acid chain; its full sequence is Neuraminidase (469 aa).

Residues 1 to 6 (MNPNQK) are Intravirion-facing. The helical transmembrane segment at 7-29 (IITIGSVSLTIATVCFLMQTAIL) threads the bilayer. Residues 11-33 (GSVSLTIATVCFLMQTAILVTTV) form an involved in apical transport and lipid raft association region. At 30–469 (VTTVTLHFKQ…DGANINFMPI (440 aa)) the chain is on the virion surface side. Positions 36-90 (HFKQYECDSPASNQVMPCEPIIIERNITEIVYLNNTTIEKEICPKVVEYRNWSKP) are hypervariable stalk region. N-linked (GlcNAc...) asparagine; by host glycosylation is found at N61, N69, N70, and N86. A head of neuraminidase region spans residues 91 to 469 (QCQITGFAPF…DGANINFMPI (379 aa)). Disulfide bonds link C92–C417, C124–C129, C183–C230, C232–C237, C278–C291, C280–C289, C318–C337, and C421–C447. A substrate-binding site is contributed by R118. An N-linked (GlcNAc...) asparagine; by host glycan is attached at N146. D151 (proton donor/acceptor) is an active-site residue. R152 provides a ligand contact to substrate. N-linked (GlcNAc...) asparagine; by host glycosylation is found at N200 and N234. 276 to 277 (EE) serves as a coordination point for substrate. Residue R292 participates in substrate binding. 3 residues coordinate Ca(2+): D293, G297, and D324. The disordered stretch occupies residues 324–350 (DTPRNDDRSSNSNCRNPNNERGNQGVK). Residues 333–342 (SNSNCRNPNN) show a composition bias toward low complexity. R371 serves as a coordination point for substrate. N402 is a glycosylation site (N-linked (GlcNAc...) asparagine; by host). The active-site Nucleophile is Y406.

The protein belongs to the glycosyl hydrolase 34 family. As to quaternary structure, homotetramer. Ca(2+) is required as a cofactor. N-glycosylated.

The protein localises to the virion membrane. It localises to the host apical cell membrane. The enzyme catalyses Hydrolysis of alpha-(2-&gt;3)-, alpha-(2-&gt;6)-, alpha-(2-&gt;8)- glycosidic linkages of terminal sialic acid residues in oligosaccharides, glycoproteins, glycolipids, colominic acid and synthetic substrates.. Its activity is regulated as follows. Inhibited by the neuraminidase inhibitors zanamivir (Relenza) and oseltamivir (Tamiflu). These drugs interfere with the release of progeny virus from infected cells and are effective against all influenza strains. Resistance to neuraminidase inhibitors is quite rare. Catalyzes the removal of terminal sialic acid residues from viral and cellular glycoconjugates. Cleaves off the terminal sialic acids on the glycosylated HA during virus budding to facilitate virus release. Additionally helps virus spread through the circulation by further removing sialic acids from the cell surface. These cleavages prevent self-aggregation and ensure the efficient spread of the progeny virus from cell to cell. Otherwise, infection would be limited to one round of replication. Described as a receptor-destroying enzyme because it cleaves a terminal sialic acid from the cellular receptors. May facilitate viral invasion of the upper airways by cleaving the sialic acid moieties on the mucin of the airway epithelial cells. Likely to plays a role in the budding process through its association with lipid rafts during intracellular transport. May additionally display a raft-association independent effect on budding. Plays a role in the determination of host range restriction on replication and virulence. Sialidase activity in late endosome/lysosome traffic seems to enhance virus replication. The chain is Neuraminidase from Influenza A virus (strain A/Northern Territory/60/1968 H3N2) (Influenza A virus (strain NT60)).